The chain runs to 305 residues: Putative glutamine--fructose-6-phosphate aminotransferase [isomerizing] (305 aa).

The active-site Nucleophile; for GATase activity is the C2. A Glutamine amidotransferase type-2 domain is found at 2 to 305 (CGIFGYCNFL…RLCITSAVCE (304 aa)).

It carries out the reaction D-fructose 6-phosphate + L-glutamine = D-glucosamine 6-phosphate + L-glutamate. The protein operates within nucleotide-sugar biosynthesis; UDP-N-acetyl-alpha-D-glucosamine biosynthesis; alpha-D-glucosamine 6-phosphate from D-fructose 6-phosphate: step 1/1. Involved in amino sugar synthesis (formation of chitin, supplies the amino sugars of asparagine-linked oligosaccharides of glycoproteins). The polypeptide is Putative glutamine--fructose-6-phosphate aminotransferase [isomerizing] (Saccharomyces cerevisiae (strain Lalvin EC1118 / Prise de mousse) (Baker's yeast)).